The primary structure comprises 161 residues: Kininogen-2 (161 aa).

The N-terminal stretch at 1–23 (MRLWFCLSFFVVLCLEHFPGTLA) is a signal peptide. Cysteines 150 and 156 form a disulfide. Val160 bears the Valine amide mark.

This sequence belongs to the bradykinin-related peptide family. In terms of tissue distribution, expressed by the skin glands.

The protein resides in the secreted. In terms of biological role, inhibits ACE with a Ki of 1.6 uM, and targets B2 bradykinin receptor (BDKRB2). Provokes contraction of smooth muscle preparation (ileum). In vivo, induces an early hyperalgesic effects in living rats after intraplantar injection. Inhibits the bradykinin-induced in vitro relaxation of rat arterial smooth muscle and constriction of intestinal smooth muscle. May target bradykinin receptors (BDKRB). This chain is Kininogen-2, found in Bombina orientalis (Oriental fire-bellied toad).